We begin with the raw amino-acid sequence, 438 residues long: Cobyrinate a,c-diamide synthase (438 aa).

One can recognise a GATase cobBQ-type domain in the interval 242-426 (TIAIARDAAF…FHAYFSSCPA (185 aa)). Cys-325 serves as the catalytic Nucleophile.

Belongs to the CobB/CbiA family. Mg(2+) serves as cofactor.

It carries out the reaction cob(II)yrinate + 2 L-glutamine + 2 ATP + 2 H2O = cob(II)yrinate a,c diamide + 2 L-glutamate + 2 ADP + 2 phosphate + 2 H(+). Its pathway is cofactor biosynthesis; adenosylcobalamin biosynthesis; cob(II)yrinate a,c-diamide from sirohydrochlorin (anaerobic route): step 10/10. Functionally, catalyzes the ATP-dependent amidation of the two carboxylate groups at positions a and c of cobyrinate, using either L-glutamine or ammonia as the nitrogen source. The polypeptide is Cobyrinate a,c-diamide synthase (Herminiimonas arsenicoxydans).